An 89-amino-acid polypeptide reads, in one-letter code: Large ribosomal subunit protein bL27 (89 aa).

Residues 1–22 (MAHKKGTGSTRNGRDSNAQRLG) are disordered. A compositionally biased stretch (polar residues) spans 7 to 19 (TGSTRNGRDSNAQ).

This sequence belongs to the bacterial ribosomal protein bL27 family.

In Cyanothece sp. (strain PCC 7425 / ATCC 29141), this protein is Large ribosomal subunit protein bL27.